Here is a 54-residue protein sequence, read N- to C-terminus: MGSATVLEVILAIILPPVGVFLRYKLGVEFWICLLLTILGYIPGIIYAVYVLVV.

Transmembrane regions (helical) follow at residues 2 to 22 (GSAT…GVFL) and 34 to 54 (LLLT…VLVV).

Belongs to the UPF0057 (PMP3) family.

It is found in the membrane. In Thinopyrum elongatum (Tall wheatgrass), this protein is Salt stress-induced hydrophobic peptide ESI3 (ESI3).